The primary structure comprises 971 residues: Exportin-2 (971 aa).

An N-acetylmethionine modification is found at methionine 1. The region spanning 29 to 102 is the Importin N-terminal domain; it reads AEKFLESVEG…KANIVHLMLS (74 aa). Serine 112 bears the Phosphoserine mark. Residues lysine 574 and lysine 824 each carry the N6-acetyllysine modification. The residue at position 931 (serine 931) is a Phosphoserine.

Belongs to the XPO2/CSE1 family. Found in a complex with CSE1L/XPO2, Ran and KPNA2. Binds with high affinity to importin-alpha only in the presence of RanGTP. The complex is dissociated by the combined action of RanBP1 and RanGAP1. Interacts with CFTR. As to expression, ubiquitous. Detected in embryos from 5 to 17 dpc. Highly expressed in adult testis, heart, brain, lung, liver, skeletal muscle, spleen and kidney.

Its subcellular location is the cytoplasm. It localises to the nucleus. Export receptor for importin-alpha. Mediates importin-alpha re-export from the nucleus to the cytoplasm after import substrates (cargos) have been released into the nucleoplasm. In the nucleus binds cooperatively to importin-alpha and to the GTPase Ran in its active GTP-bound form. Docking of this trimeric complex to the nuclear pore complex (NPC) is mediated through binding to nucleoporins. Upon transit of a nuclear export complex into the cytoplasm, disassembling of the complex and hydrolysis of Ran-GTP to Ran-GDP (induced by RANBP1 and RANGAP1, respectively) cause release of the importin-alpha from the export receptor. CSE1L/XPO2 then return to the nuclear compartment and mediate another round of transport. The directionality of nuclear export is thought to be conferred by an asymmetric distribution of the GTP- and GDP-bound forms of Ran between the cytoplasm and nucleus. In Mus musculus (Mouse), this protein is Exportin-2 (Cse1l).